A 768-amino-acid polypeptide reads, in one-letter code: Protein STRUBBELIG (768 aa).

Positions 1-24 (MSFTRWEVFFGLSVLALTMPFSAG) are cleaved as a signal peptide. The Extracellular portion of the chain corresponds to 25–341 (VTNLRDVSAI…GSGKFWSTQR (317 aa)). A disulfide bridge connects residues cysteine 57 and cysteine 66. Residue asparagine 70 is glycosylated (N-linked (GlcNAc...) asparagine). LRR repeat units follow at residues 94–115 (SIQVMDFSSNHISGTIPQALPS), 116–139 (SIRNLSLSSNRFTGNIPFTLSFLS), 140–162 (DLSELSLGSNLLSGEIPDYFQQL), 164–186 (KLTKLDLSSNILEGHLPSSMGDL), 188–210 (SLKILYLQDNKLTGTLDVIEDLF), and 211–231 (LTDLNVENNLFSGPIPPNLLK). N-linked (GlcNAc...) asparagine glycosylation is present at asparagine 119. A disordered region spans residues 241–334 (PFNTSIITPP…ISPPSGSGSG (94 aa)). N-linked (GlcNAc...) asparagine glycosylation is present at asparagine 243. Pro residues-rich tracts occupy residues 248 to 283 (TPPPPPVVDPPPATHRAPPVPRIPPVSGVPPAPFAP) and 291 to 301 (QHPPPSPPLVW). A compositionally biased stretch (polar residues) spans 315 to 334 (NSVSGQPTLQISPPSGSGSG). A helical membrane pass occupies residues 342-362 (IILVVSSVAIIVLVSGLCVTL). Residues 363–768 (WRCCRSKIYN…EIVQDLQHMI (406 aa)) are Cytoplasmic-facing. The interval 385-477 (PYFNKPPSQP…RAAHFPPGLN (93 aa)) is disordered. A compositionally biased stretch (polar residues) spans 439–464 (SYYNKDVNTPQKPLQQPPRQFQSNDT). The Protein kinase domain occupies 497-768 (FSEENIIGEG…EIVQDLQHMI (272 aa)). ATP is bound by residues 503 to 511 (IGEGSIGNV) and lysine 525.

Belongs to the protein kinase superfamily. Ser/Thr protein kinase family. As to quaternary structure, interacts (via intra-cellular domain) with AN; this interaction is not required for correct subcellular localization and recycling of SUB. Binds to QKY and POQ at the plasma membrane. Binds to QKY at plasmodesmata (PD) in root epidermal cells to promote tissue morphogenesis. Expressed in leaves, stems, inflorescences, flower buds and developing root epidermis.

It is found in the cell membrane. The protein resides in the cell junction. Its subcellular location is the plasmodesma. With respect to regulation, regulated at the post-transcriptional level. In terms of biological role, regulates the expression of transcription factors that define the cell fates. Acts in a non-cell-autonomous fashion, functions in a radial inside-out signaling process, and mediates cell morphogenesis and cell fate across clonally distinct cell layers in floral primordia, developing ovules, and root meristems. Seems to be required for the regulation of cell shape and the orientation of the mitotic division plane. Involved in root hair specification, in the formation of the outer integument and the shape of organs such as carpels and petals and is necessary for the shape and height of the stem. Non-functional SUB proteins are retained in the endoplasmic reticulum and degraded by endoplasmic reticulum-associated degradation (ERAD). Collaboratively with QKY and POQ, regulates cell growth anisotropy during gynoecium development, thus linking together cell-cell communication and cellular growth. Together with QKY, links RLK-dependent signal transduction and intercellular communication mediated by plasmodesmata (PD) to regulate tissue morphogenesis. The sequence is that of Protein STRUBBELIG from Arabidopsis thaliana (Mouse-ear cress).